The primary structure comprises 220 residues: Deoxyribose-phosphate aldolase 1 (220 aa).

The active-site Proton donor/acceptor is Asp89. The Schiff-base intermediate with acetaldehyde role is filled by Lys151. Catalysis depends on Lys180, which acts as the Proton donor/acceptor.

Belongs to the DeoC/FbaB aldolase family. DeoC type 1 subfamily.

Its subcellular location is the cytoplasm. The catalysed reaction is 2-deoxy-D-ribose 5-phosphate = D-glyceraldehyde 3-phosphate + acetaldehyde. It participates in carbohydrate degradation; 2-deoxy-D-ribose 1-phosphate degradation; D-glyceraldehyde 3-phosphate and acetaldehyde from 2-deoxy-alpha-D-ribose 1-phosphate: step 2/2. Catalyzes a reversible aldol reaction between acetaldehyde and D-glyceraldehyde 3-phosphate to generate 2-deoxy-D-ribose 5-phosphate. The protein is Deoxyribose-phosphate aldolase 1 of Mesoplasma florum (strain ATCC 33453 / NBRC 100688 / NCTC 11704 / L1) (Acholeplasma florum).